A 336-amino-acid chain; its full sequence is 3-isopropylmalate dehydrogenase (336 aa).

4 residues coordinate substrate: R87, R97, R121, and D211. D211, D235, and D239 together coordinate Mg(2+). NAD(+) is bound at residue 271 to 283 (GSAPDIAGQGIAD).

The protein belongs to the isocitrate and isopropylmalate dehydrogenases family. LeuB type 2 subfamily. As to quaternary structure, homodimer. Mg(2+) serves as cofactor. Requires Mn(2+) as cofactor.

Its subcellular location is the cytoplasm. The enzyme catalyses (2R,3S)-3-isopropylmalate + NAD(+) = 4-methyl-2-oxopentanoate + CO2 + NADH. Its pathway is amino-acid biosynthesis; L-leucine biosynthesis; L-leucine from 3-methyl-2-oxobutanoate: step 3/4. Its function is as follows. Catalyzes the oxidation of 3-carboxy-2-hydroxy-4-methylpentanoate (3-isopropylmalate) to 3-carboxy-4-methyl-2-oxopentanoate. The product decarboxylates to 4-methyl-2 oxopentanoate. In Mycolicibacterium gilvum (strain PYR-GCK) (Mycobacterium gilvum (strain PYR-GCK)), this protein is 3-isopropylmalate dehydrogenase.